Consider the following 321-residue polypeptide: Anthranilate phosphoribosyltransferase (321 aa).

5-phospho-alpha-D-ribose 1-diphosphate contacts are provided by residues G72, 75–76 (GD), T80, 82–85 (NVST), 99–107 (KHGNVSVTS), and S111. Residue G72 participates in anthranilate binding. S84 is a Mg(2+) binding site. Position 102 (N102) interacts with anthranilate. Residue R157 coordinates anthranilate. D216 and E217 together coordinate Mg(2+).

The protein belongs to the anthranilate phosphoribosyltransferase family. Homodimer. Requires Mg(2+) as cofactor.

The catalysed reaction is N-(5-phospho-beta-D-ribosyl)anthranilate + diphosphate = 5-phospho-alpha-D-ribose 1-diphosphate + anthranilate. It functions in the pathway amino-acid biosynthesis; L-tryptophan biosynthesis; L-tryptophan from chorismate: step 2/5. Functionally, catalyzes the transfer of the phosphoribosyl group of 5-phosphorylribose-1-pyrophosphate (PRPP) to anthranilate to yield N-(5'-phosphoribosyl)-anthranilate (PRA). This Methanococcus vannielii (strain ATCC 35089 / DSM 1224 / JCM 13029 / OCM 148 / SB) protein is Anthranilate phosphoribosyltransferase.